The sequence spans 101 residues: MILEHVLVLSAYLFSIGIYGLITSRNMVRALMCLELILNAVNINFVTFSDFFDSRQLKGDIFSIFVIAIAAAEAAIGLAIVSSIYRNRKSTRINQSNLLNK.

A run of 3 helical transmembrane segments spans residues 2-22, 32-52, and 61-81; these read ILEH…YGLI, MCLE…SDFF, and IFSI…LAIV.

This sequence belongs to the complex I subunit 4L family. As to quaternary structure, NDH is composed of at least 16 different subunits, 5 of which are encoded in the nucleus.

The protein resides in the plastid. It localises to the chloroplast thylakoid membrane. The catalysed reaction is a plastoquinone + NADH + (n+1) H(+)(in) = a plastoquinol + NAD(+) + n H(+)(out). The enzyme catalyses a plastoquinone + NADPH + (n+1) H(+)(in) = a plastoquinol + NADP(+) + n H(+)(out). In terms of biological role, NDH shuttles electrons from NAD(P)H:plastoquinone, via FMN and iron-sulfur (Fe-S) centers, to quinones in the photosynthetic chain and possibly in a chloroplast respiratory chain. The immediate electron acceptor for the enzyme in this species is believed to be plastoquinone. Couples the redox reaction to proton translocation, and thus conserves the redox energy in a proton gradient. This chain is NAD(P)H-quinone oxidoreductase subunit 4L, chloroplastic, found in Eucalyptus globulus subsp. globulus (Tasmanian blue gum).